Consider the following 353-residue polypeptide: Probable arabinan endo-1,5-alpha-L-arabinosidase B (353 aa).

Residues 1 to 16 form the signal peptide; that stretch reads MVLVATLFSLFTVSLC. D39 serves as the catalytic Proton acceptor. An N-linked (GlcNAc...) asparagine glycan is attached at N194. The disordered stretch occupies residues 202–227; sequence HLAKHPKTERVNSQDQNPDPLCRDSS. E233 serves as the catalytic Proton donor.

This sequence belongs to the glycosyl hydrolase 43 family.

It is found in the secreted. It catalyses the reaction Endohydrolysis of (1-&gt;5)-alpha-arabinofuranosidic linkages in (1-&gt;5)-arabinans.. Its pathway is glycan metabolism; L-arabinan degradation. In terms of biological role, endo-1,5-alpha-L-arabinanase involved in degradation of pectin. Its preferred substrate is linear 1,5-alpha-L-arabinan. This chain is Probable arabinan endo-1,5-alpha-L-arabinosidase B (abnB), found in Aspergillus oryzae (strain ATCC 42149 / RIB 40) (Yellow koji mold).